The primary structure comprises 167 residues: Signal peptidase complex subunit 2 (167 aa).

Topologically, residues 1–36 (MPKYNVSDFKSKFDKELTNHFNKNGYKQSFVFEDIR) are cytoplasmic. Residues 37–57 (LLIAIACIIPAGLAFGIEYVY) form a helical membrane-spanning segment. Residues 58–68 (GFGVLKSYLKY) lie on the Lumenal side of the membrane. The helical transmembrane segment at 69 to 89 (LLPLYFLASCLLTFWSSVVKG) threads the bilayer. Residues 90–167 (STVYVATKKE…ISKYLSQIEN (78 aa)) lie on the Cytoplasmic side of the membrane.

It belongs to the SPCS2 family. As to quaternary structure, component of the signal peptidase complex (SPC) composed of a catalytic subunit sec11 and three accessory subunits spc1, spc2 and spc3. The complex induces a local thinning of the ER membrane which is used to measure the length of the signal peptide (SP) h-region of protein substrates. This ensures the selectivity of the complex towards h-regions shorter than 18-20 amino acids. SPC associates with the translocon complex.

It is found in the endoplasmic reticulum membrane. Functionally, component of the signal peptidase complex (SPC) which catalyzes the cleavage of N-terminal signal sequences from nascent proteins as they are translocated into the lumen of the endoplasmic reticulum. Enhances the enzymatic activity of SPC and facilitates the interactions between different components of the translocation site. This Schizosaccharomyces pombe (strain 972 / ATCC 24843) (Fission yeast) protein is Signal peptidase complex subunit 2 (spc2).